The chain runs to 115 residues: Ribonuclease P protein component (115 aa).

This sequence belongs to the RnpA family. As to quaternary structure, consists of a catalytic RNA component (M1 or rnpB) and a protein subunit.

It catalyses the reaction Endonucleolytic cleavage of RNA, removing 5'-extranucleotides from tRNA precursor.. Its function is as follows. RNaseP catalyzes the removal of the 5'-leader sequence from pre-tRNA to produce the mature 5'-terminus. It can also cleave other RNA substrates such as 4.5S RNA. The protein component plays an auxiliary but essential role in vivo by binding to the 5'-leader sequence and broadening the substrate specificity of the ribozyme. The chain is Ribonuclease P protein component from Baumannia cicadellinicola subsp. Homalodisca coagulata.